A 333-amino-acid polypeptide reads, in one-letter code: L-lactate dehydrogenase A chain (333 aa).

Position 2 is an N-acetylalanine (Ala2). Residues 30–58 and Arg100 each bind NAD(+); that span reads GAVGMACAISILMKDLADEVALVDVMEDK. Positions 107, 139, and 170 each coordinate substrate. NAD(+) is bound at residue Asn139. The active-site Proton acceptor is His194. Residue Thr249 coordinates substrate.

Belongs to the LDH/MDH superfamily. LDH family. In terms of assembly, homotetramer.

It localises to the cytoplasm. The catalysed reaction is (S)-lactate + NAD(+) = pyruvate + NADH + H(+). Its pathway is fermentation; pyruvate fermentation to lactate; (S)-lactate from pyruvate: step 1/1. Its function is as follows. Interconverts simultaneously and stereospecifically pyruvate and lactate with concomitant interconversion of NADH and NAD(+). The polypeptide is L-lactate dehydrogenase A chain (ldha) (Squalus acanthias (Spiny dogfish)).